The primary structure comprises 194 residues: Interleukin-17C (194 aa).

A signal peptide spans 1–16 (MSLLLLGWLPTGMTHQ). 2 cysteine pairs are disulfide-bonded: Cys125/Cys185 and Cys130/Cys187.

It belongs to the IL-17 family. In terms of assembly, binds to a heterodimer formed by IL17RA and IL17RE. As to expression, expressed by epithelial cells after bacterial challenge. Low expression, if any, in lymphocytes.

The protein resides in the secreted. Cytokine that plays a crucial role in innate immunity of the epithelium, including to intestinal bacterial pathogens, in an autocrine manner. Stimulates the production of antibacterial peptides and pro-inflammatory molecules for host defense by signaling through the NFKB and MAPK pathways. Acts synergically with IL22, TNF and IL1B in inducing antibacterial peptides. May have protective function by maintaining epithelial homeostasis after an inflammatory challenge, such as that caused in the intestine by dextran sulfate sodium in a colitis model. May also promote an inflammatory phenotype, such as skin in a psoriasis model. Enhanced IL17C/IL17RE signaling may also lead to greater susceptibility to autoimmune diseases, such as autoimmune encephalitis. The sequence is that of Interleukin-17C (Il17c) from Mus musculus (Mouse).